A 124-amino-acid polypeptide reads, in one-letter code: UPF0102 protein PP_1324 (124 aa).

Belongs to the UPF0102 family.

This Pseudomonas putida (strain ATCC 47054 / DSM 6125 / CFBP 8728 / NCIMB 11950 / KT2440) protein is UPF0102 protein PP_1324.